The primary structure comprises 575 residues: GBF-interacting protein 1-like (575 aa).

2 disordered regions span residues 66-171 (SKRE…SKSD) and 229-296 (SSSN…VVHS). 3 stretches are compositionally biased toward polar residues: residues 90–102 (FASSNSYQGSGRN), 115–138 (TRGSRTAQPATNKASNITVPNETK), and 161–171 (ISASRCSSKSD). The segment covering 268 to 281 (AREETSTVSEDKDY) has biased composition (basic and acidic residues).

This sequence belongs to the GIP1 family. Expressed in roots, leaves, stems and flowers.

The protein localises to the nucleus. May act as a transcriptional coactivator of LOB domain-containing proteins. This chain is GBF-interacting protein 1-like, found in Arabidopsis thaliana (Mouse-ear cress).